We begin with the raw amino-acid sequence, 1073 residues long: Lon protease homolog, mitochondrial (1073 aa).

The transit peptide at 1–27 (MIKASKCNKARALFLVRTSIPRTFIRN) directs the protein to the mitochondrion. Basic and acidic residues-rich tracts occupy residues 69–107 (FDSK…RKDI) and 113–123 (YDIKEETDSKP). The segment at 69 to 173 (FDSKKEKQPS…DKEFLSPSDA (105 aa)) is disordered. Positions 132–150 (SSKSSISSSSGGANNNNNN) are enriched in low complexity. A compositionally biased stretch (basic and acidic residues) spans 158-167 (DDGSPKDKEF). Positions 177–395 (PPFLAIAMKD…LSLQLLQVEA (219 aa)) constitute a Lon N-terminal domain. 543 to 550 (GPPGTGKT) provides a ligand contact to ATP. Over residues 775 to 785 (SVISDKAKKDA) the composition is skewed to basic and acidic residues. A disordered region spans residues 775-821 (SVISDKAKKDAGSSSIESNDSNTEAKVSTTTENEKKQEQKQKQDEEI). Polar residues predominate over residues 790–805 (IESNDSNTEAKVSTTT). Basic and acidic residues predominate over residues 806 to 821 (ENEKKQEQKQKQDEEI). Residues 856–1044 (TLNPGVATGL…SEVFEHLFKG (189 aa)) enclose the Lon proteolytic domain. Active-site residues include serine 950 and lysine 993.

This sequence belongs to the peptidase S16 family. Homohexamer or homoheptamer. Organized in a ring with a central cavity.

Its subcellular location is the mitochondrion matrix. The catalysed reaction is Hydrolysis of proteins in presence of ATP.. Functionally, ATP-dependent serine protease that mediates the selective degradation of misfolded, unassembled or oxidatively damaged polypeptides as well as certain short-lived regulatory proteins in the mitochondrial matrix. May also have a chaperone function in the assembly of inner membrane protein complexes. Participates in the regulation of mitochondrial gene expression and in the maintenance of the integrity of the mitochondrial genome. Binds to mitochondrial DNA in a site-specific manner. The protein is Lon protease homolog, mitochondrial of Candida dubliniensis (strain CD36 / ATCC MYA-646 / CBS 7987 / NCPF 3949 / NRRL Y-17841) (Yeast).